Consider the following 592-residue polypeptide: Solute carrier family 13 member 2 (592 aa).

A run of 4 helical transmembrane segments spans residues 13–33 (SYLIVFFVPILLLPLPILVPS), 53–73 (ALPLAVTALFPLILFPMMGIV), 86–106 (SNLLFFGGLLVAIAVEHWNLH), and 114–134 (LLIVGVRPAPLILGFMLVTAF). The segment covering 165–177 (SSNVEEGSNNPTF) has biased composition (polar residues). Residues 165-185 (SSNVEEGSNNPTFELQEPSPQ) are disordered. The next 8 helical transmembrane spans lie at 221–241 (MSLCVCYSASIGGIATLTGTA), 274–294 (MVILLLLAWLWLQILFLGFNF), 324–344 (PMTFAEKAISILFVILVLLWF), 371–391 (GTVAIFIGIIMFIIPSKFPGL), 450–470 (PLQSVPAPAIAIILSLLVATF), 482–502 (IFLPILASMAQAICLHPLYVM), 511–531 (LAFMLPVATPPNAIVFSFGDL), and 545–565 (IIGVLIIALAINSWGIPLFSL).

This sequence belongs to the SLC13A/DASS transporter (TC 2.A.47) family. NADC subfamily. Expressed in kidney and intestine. In kidney expressed in the proximal tubule (at protein level).

The protein resides in the apical cell membrane. The catalysed reaction is succinate(out) + 3 Na(+)(out) = succinate(in) + 3 Na(+)(in). It catalyses the reaction fumarate(out) + 3 Na(+)(out) = fumarate(in) + 3 Na(+)(in). The enzyme catalyses 2-oxoglutarate(out) + 3 Na(+)(out) = 2-oxoglutarate(in) + 3 Na(+)(in). Its activity is regulated as follows. Li(+) decreases succinate transport in the presence of Na(+), by competing at one of the three cation binding sites. Its function is as follows. Low-affinity sodium-dicarboxylate cotransporter, that mediates the entry of citric acid cycle intermediates, such as succinate, citrate, fumarate and alpha-ketoglutarate (2-oxoglutarate) into the small intestine and renal proximal tubule. Transports the dicarboxylate into the cell with a probable stoichiometry of 3 Na(+) for 1 divalent dicarboxylate, rendering the process electrogenic. Citrate is transported in protonated form as a divalent anion, rather than the trivalent form which is normally found in blood. Has a critical role in renal dicarboxylate transport. This Homo sapiens (Human) protein is Solute carrier family 13 member 2 (SLC13A2).